A 167-amino-acid polypeptide reads, in one-letter code: Peptidyl-prolyl cis-trans isomerase-like 3 (167 aa).

One can recognise a PPIase cyclophilin-type domain in the interval 1–160; that stretch reads MSVTLHTTLG…EEVRIERVTV (160 aa).

It belongs to the cyclophilin-type PPIase family. PPIL3 subfamily.

The catalysed reaction is [protein]-peptidylproline (omega=180) = [protein]-peptidylproline (omega=0). In terms of biological role, PPIases accelerate the folding of proteins. It catalyzes the cis-trans isomerization of proline imidic peptide bonds in oligopeptides. This is Peptidyl-prolyl cis-trans isomerase-like 3 (cyp-10) from Neurospora crassa (strain ATCC 24698 / 74-OR23-1A / CBS 708.71 / DSM 1257 / FGSC 987).